Consider the following 290-residue polypeptide: uncharacterized protein (290 aa).

The 61-residue stretch at 1–61 (MVMNMNHLHI…RDKHHGLMLT (61 aa)) folds into the HTH lysR-type domain. Residues 20–39 (ITEAAKELFISQPAVSKAIK) constitute a DNA-binding region (H-T-H motif).

The protein belongs to the LysR transcriptional regulatory family.

This is an uncharacterized protein from Bacillus subtilis (strain 168).